The following is a 481-amino-acid chain: 3-isopropylmalate dehydratase large subunit (481 aa).

Cysteine 363, cysteine 423, and cysteine 426 together coordinate [4Fe-4S] cluster. Residues 432–459 (DQLKPGERSASTSNRNFEGRQGPGGRTH) are disordered.

Belongs to the aconitase/IPM isomerase family. LeuC type 1 subfamily. As to quaternary structure, heterodimer of LeuC and LeuD. [4Fe-4S] cluster serves as cofactor.

The enzyme catalyses (2R,3S)-3-isopropylmalate = (2S)-2-isopropylmalate. Its pathway is amino-acid biosynthesis; L-leucine biosynthesis; L-leucine from 3-methyl-2-oxobutanoate: step 2/4. In terms of biological role, catalyzes the isomerization between 2-isopropylmalate and 3-isopropylmalate, via the formation of 2-isopropylmaleate. The sequence is that of 3-isopropylmalate dehydratase large subunit from Corynebacterium glutamicum (strain R).